We begin with the raw amino-acid sequence, 803 residues long: Bifunctional enzyme MurC/Ddl (803 aa).

Positions 1–446 (MMKSLFYHFI…GEKLRDFEPQ (446 aa)) are UDP-N-acetylmuramate--alanine ligase. ATP-binding positions include 111 to 117 (GSHGKTT) and 600 to 655 (VEAF…CKEI). The interval 447–803 (KLHLGIICGG…SFVDQAFAIQ (357 aa)) is D-alanine--D-alanine ligase. Positions 567-778 (KRFMSDLGIP…YEQIVHQLVI (212 aa)) constitute an ATP-grasp domain. Mg(2+)-binding residues include Asp732, Glu745, and Asn747.

The protein in the N-terminal section; belongs to the MurCDEF family. In the C-terminal section; belongs to the D-alanine--D-alanine ligase family. Mg(2+) serves as cofactor. It depends on Mn(2+) as a cofactor.

The protein resides in the cytoplasm. The enzyme catalyses UDP-N-acetyl-alpha-D-muramate + L-alanine + ATP = UDP-N-acetyl-alpha-D-muramoyl-L-alanine + ADP + phosphate + H(+). The catalysed reaction is 2 D-alanine + ATP = D-alanyl-D-alanine + ADP + phosphate + H(+). It participates in cell wall biogenesis; peptidoglycan biosynthesis. Functionally, cell wall formation. In Chlamydia trachomatis serovar D (strain ATCC VR-885 / DSM 19411 / UW-3/Cx), this protein is Bifunctional enzyme MurC/Ddl (murC/ddl).